The following is a 225-amino-acid chain: PKHD-type hydroxylase HEAR3399 (225 aa).

Positions 77 to 177 (RYMPPLFNRY…RVCSFFWLQS (101 aa)) constitute a Fe2OG dioxygenase domain. Residues histidine 95, aspartate 97, and histidine 158 each contribute to the Fe cation site. Arginine 168 is a binding site for 2-oxoglutarate.

The cofactor is Fe(2+). Requires L-ascorbate as cofactor.

The polypeptide is PKHD-type hydroxylase HEAR3399 (Herminiimonas arsenicoxydans).